A 268-amino-acid chain; its full sequence is Taurine import ATP-binding protein TauB (268 aa).

Residues 4 to 236 (LSINNLSMRF…LGVDSDLREV (233 aa)) form the ABC transporter domain. 41–48 (GPSGCGKT) lines the ATP pocket.

It belongs to the ABC transporter superfamily. Taurine importer (TC 3.A.1.17.1) family. The complex is composed of two ATP-binding proteins (TauB), two transmembrane proteins (TauC) and a solute-binding protein (TauA).

The protein localises to the cell inner membrane. The enzyme catalyses taurine(out) + ATP + H2O = taurine(in) + ADP + phosphate + H(+). Functionally, part of the ABC transporter complex TauABC involved in taurine import. Responsible for energy coupling to the transport system. The chain is Taurine import ATP-binding protein TauB from Roseobacter denitrificans (strain ATCC 33942 / OCh 114) (Erythrobacter sp. (strain OCh 114)).